The chain runs to 107 residues: Small ribosomal subunit protein bS6 (107 aa).

The protein belongs to the bacterial ribosomal protein bS6 family.

Its function is as follows. Binds together with bS18 to 16S ribosomal RNA. In Synechococcus elongatus (strain ATCC 33912 / PCC 7942 / FACHB-805) (Anacystis nidulans R2), this protein is Small ribosomal subunit protein bS6.